The primary structure comprises 359 residues: Mitochondrial glutathione transporter SLC25A39 (359 aa).

Residues 1-14 lie on the Mitochondrial intermembrane side of the membrane; sequence MDDQDPGGISPLQQ. Solcar repeat units follow at residues 9 to 151, 159 to 243, and 253 to 347; these read ISPL…LKAF, SDLY…VKSW, and TSVG…GKSF. A helical membrane pass occupies residues 15-35; the sequence is MVASGAGAVVTSLFMTPLDVV. Residues 36 to 121 lie on the Mitochondrial matrix side of the membrane; it reads KVRLQSQRPS…VKIVRHEGTR (86 aa). Residues Cys-74, Cys-78, Cys-88, and Cys-94 each contribute to the [2Fe-2S] cluster site. A helical transmembrane segment spans residues 122–142; the sequence is TLWSGLPATLVMTVPATAIYF. Over 143–164 the chain is Mitochondrial intermembrane; it reads TAYDQLKAFLCGQSLTSDLYAP. The chain crosses the membrane as a helical span at residues 165 to 185; the sequence is MVAGALARMGTVTVVSPLELV. Residues 186-214 are Mitochondrial matrix-facing; sequence RTKLQAQHVSYRELASSVQAAVTQGGWRS. A helical membrane pass occupies residues 215–235; the sequence is LWLGWGPTALRDVPFSALYWF. The Mitochondrial intermembrane segment spans residues 236 to 255; that stretch reads NYELVKSWLSGLRPKDQTSV. A helical transmembrane segment spans residues 256–276; it reads GISFVAGGISGMVAATLTLPF. The Mitochondrial matrix segment spans residues 277–317; it reads DVVKTQRQMSLGAVEAVRVKPPRVDSTWLLLRRIRAESGTR. Residues 318–338 form a helical membrane-spanning segment; sequence GLFAGFLPRIIKAAPSCAIMI. Topologically, residues 339 to 359 are mitochondrial intermembrane; that stretch reads STYEFGKSFFQRLNQEQPLGR.

The protein belongs to the mitochondrial carrier (TC 2.A.29) family. Post-translationally, cleaved and degraded by AFG3L2; degradation by AFG3L2 is regulated by the ability of SLC25A39 to bind iron-sulfur. In absence of mitochondrial glutathione, SLC25A39 binds iron-sulfur, preventing cleavage and degradation by AFG3L2. The presence of mitochondrial glutathione prevents iron-sulfur-binding to SLC25A39, promoting cleavage and degradation by AFG3L2. In terms of tissue distribution, abundant expression in bone marrow, spleen, testis and kidney.

The protein resides in the mitochondrion inner membrane. The enzyme catalyses glutathione(in) = glutathione(out). The activity of SLC25A39 is regulated by levels of mitochondrial glutathione via its ability to bind [2Fe-2S] iron-sulfur cluster. Upon physiological levels of mitochondrial glutathione, glutathione prevents iron-sulfur-binding to SLC25A39 promoting cleavage and degradation by AFG3L2. Upon depletion of mitochondrial glutathione, SLC25A39 binds iron-sulfur, preventing cleavage and degradation by AFG3L2. Functionally, mitochondrial transporter required for glutathione import into mitochondria. Glutathione, which plays key roles in oxidative metabolism, is produced exclusively in the cytosol and is imported in many organelles. Mitochondrial glutathione is required for the activity and stability of proteins containing iron-sulfur clusters, as well as erythropoiesis. The sequence is that of Mitochondrial glutathione transporter SLC25A39 from Mus musculus (Mouse).